A 102-amino-acid polypeptide reads, in one-letter code: Thioredoxin (102 aa).

The region spanning 1–102 is the Thioredoxin domain; it reads MVKVVSAENF…SLIRLINQHS (102 aa). C28 and C31 are disulfide-bonded.

This sequence belongs to the thioredoxin family.

In terms of biological role, participates in various redox reactions through the reversible oxidation of its active center dithiol to a disulfide and catalyzes dithiol-disulfide exchange reactions. This is Thioredoxin (trxA) from Chlamydia caviae (strain ATCC VR-813 / DSM 19441 / 03DC25 / GPIC) (Chlamydophila caviae).